The chain runs to 330 residues: Virulence plasmid integrase pGP8-D (330 aa).

A Core-binding (CB) domain is found at 39–124 (FSLFEVIMHW…SYISLTRFLN (86 aa)). The Tyr recombinase domain occupies 152–327 (VKTDAMNSLQ…SREDNASKKM (176 aa)). Residues Arg189, Lys214, His279, Arg282, and His305 contribute to the active site. Tyr314 acts as the O-(3'-phospho-DNA)-tyrosine intermediate in catalysis.

The protein belongs to the 'phage' integrase family.

The chain is Virulence plasmid integrase pGP8-D from Chlamydia trachomatis serovar L2 (strain ATCC VR-902B / DSM 19102 / 434/Bu).